A 471-amino-acid polypeptide reads, in one-letter code: Glutamate--tRNA ligase 1 (471 aa).

The 'HIGH' region signature appears at 15–25 (PSPTGYLHIGG). The 'KMSKS' region motif lies at 243–247 (KLSKR). An ATP-binding site is contributed by Lys246.

This sequence belongs to the class-I aminoacyl-tRNA synthetase family. Glutamate--tRNA ligase type 1 subfamily. In terms of assembly, monomer.

The protein localises to the cytoplasm. The catalysed reaction is tRNA(Glu) + L-glutamate + ATP = L-glutamyl-tRNA(Glu) + AMP + diphosphate. Its function is as follows. Catalyzes the attachment of glutamate to tRNA(Glu) in a two-step reaction: glutamate is first activated by ATP to form Glu-AMP and then transferred to the acceptor end of tRNA(Glu). The sequence is that of Glutamate--tRNA ligase 1 from Cereibacter sphaeroides (strain ATCC 17023 / DSM 158 / JCM 6121 / CCUG 31486 / LMG 2827 / NBRC 12203 / NCIMB 8253 / ATH 2.4.1.) (Rhodobacter sphaeroides).